A 192-amino-acid chain; its full sequence is MAIQLSKGQRIDLTKTNPGLTKAVIGLGWDTNKYSGGHDFDLDASAFLVDAHDNCVNDLDFVFYNNLEHPSGGVIHTGDNRTGEGDGDDEQIIVDFSKIPAHIEKIGITVTIHDAEARSQNFGQVSNAFVRVVDEETQNELLRFDLGEDFSIETAVVVCELYRHGGEWKFNAIGSGFSGGLAALCRNYGLQV.

The protein belongs to the CAPAB/TerDEXZ family.

This is an uncharacterized protein from Bacillus subtilis (strain 168).